We begin with the raw amino-acid sequence, 195 residues long: Large ribosomal subunit protein uL5 (195 aa).

This sequence belongs to the universal ribosomal protein uL5 family. In terms of assembly, part of the 50S ribosomal subunit; part of the 5S rRNA/L5/L18/L25 subcomplex. Contacts the 5S rRNA and the P site tRNA. Forms a bridge to the 30S subunit in the 70S ribosome.

Its function is as follows. This is one of the proteins that bind and probably mediate the attachment of the 5S RNA into the large ribosomal subunit, where it forms part of the central protuberance. In the 70S ribosome it contacts protein S13 of the 30S subunit (bridge B1b), connecting the 2 subunits; this bridge is implicated in subunit movement. Contacts the P site tRNA; the 5S rRNA and some of its associated proteins might help stabilize positioning of ribosome-bound tRNAs. In Leifsonia xyli subsp. xyli (strain CTCB07), this protein is Large ribosomal subunit protein uL5.